A 605-amino-acid chain; its full sequence is Aspartate--tRNA(Asp/Asn) ligase (605 aa).

Glu178 lines the L-aspartate pocket. Residues 202-205 (QLFK) form an aspartate region. L-aspartate is bound at residue Arg224. Residues 224-226 (RDE) and Gln233 contribute to the ATP site. His458 lines the L-aspartate pocket. Glu488 contributes to the ATP binding site. Arg495 is a binding site for L-aspartate. ATP is bound at residue 540 to 543 (GLDR). Positions 580-605 (QQLKELHVTPAKPAKTTAKTKPRPAD) are disordered.

It belongs to the class-II aminoacyl-tRNA synthetase family. Type 1 subfamily. Homodimer.

It localises to the cytoplasm. It catalyses the reaction tRNA(Asx) + L-aspartate + ATP = L-aspartyl-tRNA(Asx) + AMP + diphosphate. Functionally, aspartyl-tRNA synthetase with relaxed tRNA specificity since it is able to aspartylate not only its cognate tRNA(Asp) but also tRNA(Asn). Reaction proceeds in two steps: L-aspartate is first activated by ATP to form Asp-AMP and then transferred to the acceptor end of tRNA(Asp/Asn). This Thermosynechococcus vestitus (strain NIES-2133 / IAM M-273 / BP-1) protein is Aspartate--tRNA(Asp/Asn) ligase.